The following is a 460-amino-acid chain: T-box transcription factor TBX1 (460 aa).

Disordered regions lie at residues L30–F53 and G67–K99. The segment covering G67–C84 has biased composition (polar residues). Residues L116–D294 constitute a DNA-binding region (T-box). Disordered stretches follow at residues R317 to H355 and P376 to L400. Polar residues predominate over residues N320 to G330. The segment covering T331–P344 has biased composition (basic and acidic residues). Residues K418–I429 carry the Nuclear localization signal motif.

In terms of assembly, binds DNA as a dimer. Expressed in the ear and mesendodermal components of pharyngeal arches.

It localises to the nucleus. Probable transcriptional regulator involved in developmental processes. Binds to the palindromic T site 5'-TTCACACCTAGGTGTGAA-3' DNA sequence. Is required for normal development of the pharyngeal arch arteries. Acts cell autonomously in the pharyngeal mesendoderm and influences the development of neural crest-derived cartilages secondarily. This Danio rerio (Zebrafish) protein is T-box transcription factor TBX1 (tbx1).